Consider the following 1148-residue polypeptide: Protein pianissimo A (1148 aa).

Residues 1–34 (MTSSDSSVNTTSSSFGNISISSPNHSSSTPPLNN) are compositionally biased toward low complexity. The interval 1–41 (MTSSDSSVNTTSSSFGNISISSPNHSSSTPPLNNGNGNNVS) is disordered. Residues 803-914 (KVSALSLNVL…STSGVYLPPH (112 aa)) enclose the N-terminal Ras-GEF domain.

Belongs to the RICTOR family. In terms of assembly, part of a complex, TORC2, consisting of tor, lst8, piaA and ripA. Additional proteins, such as 14-3-3 and heat-shock proteins, may also belong to the TORC2 complex.

The protein resides in the cytoplasm. In terms of biological role, regulates cell growth, chemotaxis, signal relay and the actin cytoskeleton. Required for chemoattractant receptor and G protein-mediated activation of the 12 transmembrane domain adenylyl cyclase. Functions as a part of protein complex TORC2. TORC2, is presumed to be indirectly negatively modulated by rapamycin and regulates actin polarization. TORC2, but not TORC1, negatively regulates phagocytosis. This protein and dagA protein CRAC, a cytosolic regulator, are both essential for activation of the enzyme adenylyl cyclase. This protein and CRAC do not function redundantly. Both proteins are integral components of the adenylyl cyclase activation pathway. The polypeptide is Protein pianissimo A (piaA) (Dictyostelium discoideum (Social amoeba)).